We begin with the raw amino-acid sequence, 204 residues long: Thymidylate kinase (204 aa).

9–16 (GLDGAGKS) serves as a coordination point for ATP.

The protein belongs to the thymidylate kinase family.

The catalysed reaction is dTMP + ATP = dTDP + ADP. Phosphorylation of dTMP to form dTDP in both de novo and salvage pathways of dTTP synthesis. In Francisella philomiragia subsp. philomiragia (strain ATCC 25017 / CCUG 19701 / FSC 153 / O#319-036), this protein is Thymidylate kinase.